The sequence spans 145 residues: Protein H2A.5 (145 aa).

Residues 118–145 (SPAAAEKEAKSQKAAAKSPKKKTAATKE) are disordered. Positions 135 to 138 (SPKK) match the SPKK motif motif. A compositionally biased stretch (basic residues) spans 135-145 (SPKKKTAATKE).

This sequence belongs to the histone H2A family. In terms of assembly, the nucleosome is a histone octamer containing two molecules each of H2A, H2B, H3 and H4 assembled in one H3-H4 heterotetramer and two H2A-H2B heterodimers. The octamer wraps approximately 147 bp of DNA. In terms of tissue distribution, abundant in meristematic tissues.

It localises to the nucleus. Its subcellular location is the chromosome. Its function is as follows. Core component of nucleosome. Nucleosomes wrap and compact DNA into chromatin, limiting DNA accessibility to the cellular machineries which require DNA as a template. Histones thereby play a central role in transcription regulation, DNA repair, DNA replication and chromosomal stability. DNA accessibility is regulated via a complex set of post-translational modifications of histones, also called histone code, and nucleosome remodeling. This is Protein H2A.5 (H2A-2) from Triticum aestivum (Wheat).